Reading from the N-terminus, the 229-residue chain is Protein GLC8 (229 aa).

3 disordered regions span residues 1-21 (MGGI…QQDP), 35-62 (TQKN…EIIG), and 107-229 (QFQD…TKEP). Residue Ser12 is modified to Phosphoserine. Positions 107 to 117 (QFQDIHIDEPK) are enriched in basic and acidic residues. Phosphothreonine; by PHO85 is present on Thr118. A Phosphoserine modification is found at Ser158. A compositionally biased stretch (basic and acidic residues) spans 164-173 (FEIKENKQPD). A compositionally biased stretch (acidic residues) spans 175 to 184 (ETNDENDEDS). A Phosphoserine modification is found at Ser184. Residues 185–196 (PEARHKKFEEMR) are compositionally biased toward basic and acidic residues.

Phosphorylated by the cyclin-CDKs PCL6-PHO85 and PCL7-PHO85. Phosphorylation of Thr-118 inactivates GLC8.

Its function is as follows. Modulator of GLC7 type-1 protein phosphatase. This chain is Protein GLC8 (GLC8), found in Saccharomyces cerevisiae (strain ATCC 204508 / S288c) (Baker's yeast).